Reading from the N-terminus, the 175-residue chain is Protein-export protein SecB (175 aa).

It belongs to the SecB family. As to quaternary structure, homotetramer, a dimer of dimers. One homotetramer interacts with 1 SecA dimer.

The protein localises to the cytoplasm. Functionally, one of the proteins required for the normal export of preproteins out of the cell cytoplasm. It is a molecular chaperone that binds to a subset of precursor proteins, maintaining them in a translocation-competent state. It also specifically binds to its receptor SecA. The sequence is that of Protein-export protein SecB from Ehrlichia chaffeensis (strain ATCC CRL-10679 / Arkansas).